The following is a 181-amino-acid chain: Fibroblast growth factor homolog (181 aa).

A signal peptide spans 1–16; the sequence is MYRLLALVALASMADC.

It belongs to the heparin-binding growth factors family.

In Lepidoptera (butterflies and moths), this protein is Fibroblast growth factor homolog (FGF).